A 795-amino-acid chain; its full sequence is Protein translocase subunit SecA 2 (795 aa).

ATP-binding positions include glutamine 84, 102-106, and aspartate 496; that span reads GEGKT.

It belongs to the SecA family. As to quaternary structure, monomer and homodimer. Part of the essential Sec protein translocation apparatus which comprises SecA, SecYEG and auxiliary proteins SecDF. Other proteins may also be involved.

Its subcellular location is the cell membrane. The protein localises to the cytoplasm. It catalyses the reaction ATP + H2O + cellular proteinSide 1 = ADP + phosphate + cellular proteinSide 2.. Its function is as follows. Part of the Sec protein translocase complex. Interacts with the SecYEG preprotein conducting channel. Has a central role in coupling the hydrolysis of ATP to the transfer of proteins into and across the cell membrane, serving as an ATP-driven molecular motor driving the stepwise translocation of polypeptide chains across the membrane. This is Protein translocase subunit SecA 2 from Streptococcus agalactiae serotype III (strain NEM316).